Consider the following 400-residue polypeptide: Putative cytochrome P450 133B2 (400 aa).

Position 348 (C348) interacts with heme.

Belongs to the cytochrome P450 family. Requires heme as cofactor.

This Xylella fastidiosa (strain 9a5c) protein is Putative cytochrome P450 133B2 (cyp133B2).